Consider the following 435-residue polypeptide: MSIITDVYAREVLDSRGNPTLEVEVYTESGAFGRGMVPSGASTGEHEAVELRDGDKSRYLGLGTQKAVDNVNNIIAEAIIGYDVRDQQAIDRAMITLDGTPNKGKLGANAILGVSIAVARAAADYLEVPLYTYLGGFNTKVLPTPMMNIINGGSHSDAPIAFQEFMIMPVGAPTFKEGLRWGAEVFHALKKILKERGLVTAVGDEGGFAPKFEGTEDGVETILKAIEAAGYEAGENGIMIGFDCASSEFYDKERKVYDYTKFEGEGAAVRTSAEQVDYLEELVNKYPIITIEDGMDENDWDGWKVLTERLGKRVQLVGDDFFVTNTEYLARGIKENAANSILIKVNQIGTLTETFEAIEMAKEAGYTAVVSHRSGETEDSTIADIAVATNAGQIKTGSLSRTDRIAKYNQLLRIEDQLGEVAQYKGIKSFYNLKK.

Glutamine 163 is a (2R)-2-phosphoglycerate binding site. Glutamate 205 serves as the catalytic Proton donor. Aspartate 243, glutamate 292, and aspartate 319 together coordinate Mg(2+). Positions 344, 373, 374, and 395 each coordinate (2R)-2-phosphoglycerate. The Proton acceptor role is filled by lysine 344.

The protein belongs to the enolase family. Mg(2+) is required as a cofactor.

The protein resides in the cytoplasm. It is found in the secreted. The protein localises to the cell surface. The catalysed reaction is (2R)-2-phosphoglycerate = phosphoenolpyruvate + H2O. Its pathway is carbohydrate degradation; glycolysis; pyruvate from D-glyceraldehyde 3-phosphate: step 4/5. In terms of biological role, catalyzes the reversible conversion of 2-phosphoglycerate (2-PG) into phosphoenolpyruvate (PEP). It is essential for the degradation of carbohydrates via glycolysis. The sequence is that of Enolase from Streptococcus pyogenes serotype M12 (strain MGAS2096).